The sequence spans 62 residues: Metallothionein-4 (62 aa).

Positions 6, 8, 14, 16, 20, 22, 25, 27, 34, 35, 37, 38, 42, 45, 49, 51, 58, 60, and 61 each coordinate a divalent metal cation.

Belongs to the metallothionein superfamily. Type 1 family.

In terms of biological role, seems to bind zinc and copper. Could play a special role in regulating zinc metabolism during the differentiation of stratified epithelia. This Homo sapiens (Human) protein is Metallothionein-4 (MT4).